Consider the following 1029-residue polypeptide: Carbamoyl phosphate synthase large chain (1029 aa).

The tract at residues Met-1–Glu-402 is carboxyphosphate synthetic domain. Arg-129, Arg-169, Gly-175, Gly-176, Glu-208, Ile-210, Glu-215, Gly-241, Val-242, His-243, Gln-285, and Glu-299 together coordinate ATP. Positions Gln-133 to Val-328 constitute an ATP-grasp 1 domain. The Mg(2+) site is built by Gln-285, Glu-299, and Asn-301. 3 residues coordinate Mn(2+): Gln-285, Glu-299, and Asn-301. An oligomerization domain region spans residues Ser-403 to Asp-544. The carbamoyl phosphate synthetic domain stretch occupies residues Glu-545–Lys-929. Positions Asn-671–Val-863 constitute an ATP-grasp 2 domain. Arg-707, Gln-747, Leu-749, Glu-754, Gly-779, Val-780, His-781, Ser-782, Gln-822, and Glu-834 together coordinate ATP. The Mg(2+) site is built by Gln-822, Glu-834, and Asn-836. Residues Gln-822, Glu-834, and Asn-836 each coordinate Mn(2+). Residues Ser-930–Ala-1028 enclose the MGS-like domain. The tract at residues Ser-930–Gly-1029 is allosteric domain.

It belongs to the CarB family. In terms of assembly, composed of two chains; the small (or glutamine) chain promotes the hydrolysis of glutamine to ammonia, which is used by the large (or ammonia) chain to synthesize carbamoyl phosphate. Tetramer of heterodimers (alpha,beta)4. Mg(2+) is required as a cofactor. Requires Mn(2+) as cofactor.

It catalyses the reaction hydrogencarbonate + L-glutamine + 2 ATP + H2O = carbamoyl phosphate + L-glutamate + 2 ADP + phosphate + 2 H(+). The enzyme catalyses hydrogencarbonate + NH4(+) + 2 ATP = carbamoyl phosphate + 2 ADP + phosphate + 2 H(+). Its pathway is amino-acid biosynthesis; L-arginine biosynthesis; carbamoyl phosphate from bicarbonate: step 1/1. It participates in pyrimidine metabolism; UMP biosynthesis via de novo pathway; (S)-dihydroorotate from bicarbonate: step 1/3. Functionally, large subunit of the glutamine-dependent carbamoyl phosphate synthetase (CPSase). CPSase catalyzes the formation of carbamoyl phosphate from the ammonia moiety of glutamine, carbonate, and phosphate donated by ATP, constituting the first step of 2 biosynthetic pathways, one leading to arginine and/or urea and the other to pyrimidine nucleotides. The large subunit (synthetase) binds the substrates ammonia (free or transferred from glutamine from the small subunit), hydrogencarbonate and ATP and carries out an ATP-coupled ligase reaction, activating hydrogencarbonate by forming carboxy phosphate which reacts with ammonia to form carbamoyl phosphate. The chain is Carbamoyl phosphate synthase large chain from Deinococcus deserti (strain DSM 17065 / CIP 109153 / LMG 22923 / VCD115).